Here is a 98-residue protein sequence, read N- to C-terminus: NADH-ubiquinone oxidoreductase chain 4L (98 aa).

Transmembrane regions (helical) follow at residues 1–21 (MSMV…GLLI), 30–50 (LLCL…TILT), and 61–81 (IILL…LVMI).

The protein belongs to the complex I subunit 4L family. In terms of assembly, core subunit of respiratory chain NADH dehydrogenase (Complex I) which is composed of 45 different subunits.

The protein localises to the mitochondrion inner membrane. It carries out the reaction a ubiquinone + NADH + 5 H(+)(in) = a ubiquinol + NAD(+) + 4 H(+)(out). Functionally, core subunit of the mitochondrial membrane respiratory chain NADH dehydrogenase (Complex I) which catalyzes electron transfer from NADH through the respiratory chain, using ubiquinone as an electron acceptor. Part of the enzyme membrane arm which is embedded in the lipid bilayer and involved in proton translocation. The sequence is that of NADH-ubiquinone oxidoreductase chain 4L (MT-ND4L) from Martes americana (American marten).